Here is a 441-residue protein sequence, read N- to C-terminus: tRNA-2-methylthio-N(6)-dimethylallyladenosine synthase (441 aa).

The 117-residue stretch at 5–121 folds into the MTTase N-terminal domain; that stretch reads KKLFIKTYGC…LPQMEARLRE (117 aa). [4Fe-4S] cluster-binding residues include cysteine 14, cysteine 50, cysteine 84, cysteine 159, cysteine 163, and cysteine 166. In terms of domain architecture, Radical SAM core spans 145 to 380; it reads ARRAPSAFLT…TRQQQDIQQS (236 aa). A TRAM domain is found at 379 to 441; that stretch reads QSMVGRDVSV…RNSLAAVTLA (63 aa).

The protein belongs to the methylthiotransferase family. MiaB subfamily. Monomer. The cofactor is [4Fe-4S] cluster.

The protein localises to the cytoplasm. It catalyses the reaction N(6)-dimethylallyladenosine(37) in tRNA + (sulfur carrier)-SH + AH2 + 2 S-adenosyl-L-methionine = 2-methylsulfanyl-N(6)-dimethylallyladenosine(37) in tRNA + (sulfur carrier)-H + 5'-deoxyadenosine + L-methionine + A + S-adenosyl-L-homocysteine + 2 H(+). In terms of biological role, catalyzes the methylthiolation of N6-(dimethylallyl)adenosine (i(6)A), leading to the formation of 2-methylthio-N6-(dimethylallyl)adenosine (ms(2)i(6)A) at position 37 in tRNAs that read codons beginning with uridine. The sequence is that of tRNA-2-methylthio-N(6)-dimethylallyladenosine synthase from Roseobacter denitrificans (strain ATCC 33942 / OCh 114) (Erythrobacter sp. (strain OCh 114)).